A 563-amino-acid polypeptide reads, in one-letter code: Arginine--tRNA ligase (563 aa).

The 'HIGH' region signature appears at 121–131 (PNIAKPFSIGH).

This sequence belongs to the class-I aminoacyl-tRNA synthetase family. Monomer.

The protein resides in the cytoplasm. It carries out the reaction tRNA(Arg) + L-arginine + ATP = L-arginyl-tRNA(Arg) + AMP + diphosphate. The sequence is that of Arginine--tRNA ligase from Streptococcus pneumoniae (strain Taiwan19F-14).